A 645-amino-acid polypeptide reads, in one-letter code: Zinc finger protein 64 (645 aa).

3 C2H2-type zinc fingers span residues 175 to 197, 203 to 225, and 231 to 253; these read HKCE…MRCH, YKCK…LRIH, and FKCQ…LRSH. Residue Glu-286 forms a Glycyl lysine isopeptide (Lys-Gly) (interchain with G-Cter in SUMO2) linkage. The segment at 299 to 324 adopts a C2H2-type 4; atypical zinc-finger fold; that stretch reads FNCCYPGCHFKTVHGMKDLDRHLRIH. 9 consecutive C2H2-type zinc fingers follow at residues 330 to 352, 358 to 380, 386 to 408, 414 to 436, 442 to 465, 467 to 489, 495 to 517, 523 to 546, and 580 to 602; these read HKCE…MRCH, HKCH…LRIH, YKCQ…LRSH, FQCW…MIVH, FKCE…RIKH, FKCL…SRLH, EKCP…SRVH, FKCD…DKVH, and FRCE…KKQH. A Glycyl lysine isopeptide (Lys-Gly) (interchain with G-Cter in SUMO2) cross-link involves residue Asn-397. Composition is skewed to basic and acidic residues over residues 543–554 and 600–610; these read DKVHRDEAKTEN and KQHSDQSENKN. Disordered stretches follow at residues 543-567 and 600-645; these read DKVH…REGS and KQHS…SQDL. A Phosphoserine modification is found at Val-545. Residues 622 to 631 are compositionally biased toward polar residues; it reads ASGQLSTLVS.

This sequence belongs to the krueppel C2H2-type zinc-finger protein family. Interacts with ZNF70; this interaction promote the transactivation of the HES1 gene. Interacts with NOTCH1.

Its subcellular location is the nucleus. In terms of biological role, may be involved in the regulation of mesenchymal cell differentiation through transactivation of NOTCH1 target genes. This is Zinc finger protein 64 from Homo sapiens (Human).